A 1087-amino-acid chain; its full sequence is Exportin-7 (1087 aa).

Alanine 2 carries the post-translational modification N-acetylalanine. In terms of domain architecture, Importin N-terminal spans 30 to 96 (AEKALVEFTN…RNYVLNYLAT (67 aa)). Serine 570 bears the Phosphoserine mark.

The protein belongs to the exportin family. Binds to nucleoporins. Found in a complex with XPO7, EIF4A1, ARHGAP1, VPS26A, VPS29, VPS35 and SFN. Interacts with ARHGAP1 and SFN. Interacts with Ran and cargo proteins in a GTP-dependent manner.

It is found in the cytoplasm. The protein resides in the nucleus. It localises to the nuclear pore complex. Mediates the nuclear export of proteins (cargos) with broad substrate specificity. In the nucleus binds cooperatively to its cargo and to the GTPase Ran in its active GTP-bound form. Docking of this trimeric complex to the nuclear pore complex (NPC) is mediated through binding to nucleoporins. Upon transit of a nuclear export complex into the cytoplasm, disassembling of the complex and hydrolysis of Ran-GTP to Ran-GDP (induced by RANBP1 and RANGAP1, respectively) cause release of the cargo from the export receptor. XPO7 then return to the nuclear compartment and mediate another round of transport. The directionality of nuclear export is thought to be conferred by an asymmetric distribution of the GTP- and GDP-bound forms of Ran between the cytoplasm and nucleus. This Pongo abelii (Sumatran orangutan) protein is Exportin-7 (XPO7).